A 193-amino-acid chain; its full sequence is Imidazoleglycerol-phosphate dehydratase (193 aa).

The protein belongs to the imidazoleglycerol-phosphate dehydratase family.

The protein resides in the cytoplasm. The enzyme catalyses D-erythro-1-(imidazol-4-yl)glycerol 3-phosphate = 3-(imidazol-4-yl)-2-oxopropyl phosphate + H2O. It functions in the pathway amino-acid biosynthesis; L-histidine biosynthesis; L-histidine from 5-phospho-alpha-D-ribose 1-diphosphate: step 6/9. This chain is Imidazoleglycerol-phosphate dehydratase, found in Methanospirillum hungatei JF-1 (strain ATCC 27890 / DSM 864 / NBRC 100397 / JF-1).